The chain runs to 92 residues: Large ribosomal subunit protein eL43 (92 aa).

The C4-type zinc finger occupies 39–60; the sequence is CEFCGKFAVKRKAVGIWGCKDC.

It belongs to the eukaryotic ribosomal protein eL43 family.

This Pseudotsuga menziesii (Douglas-fir) protein is Large ribosomal subunit protein eL43 (RPL37A).